Consider the following 727-residue polypeptide: MDNRKEPPFFNDDNMGPFYYRLHFCDTMELFIETLTGTCFELRVSPFETVISVKAKIRRLEGIPICRQHLIWNNMELENDYCLNDYNISEGCTLKLVLAMRGGPINTRRVPTDDPLRKMAEYLDSSRVEVWEKTSCSKQVTFLVYQEGDQLNFFPAVDRGDGTLTPLSDSSKKIDFHLHVLRRKGEHRMSGGSMYNSDTDEDEETEPSSSGQQIIENSITMNKMKLLKAKMKNMNLSKKPKKAVKIKPHPPVAPRPSSGSTAPSRHRLLRVLPNIGQSCSPAFGNAYPPEISRNGISSLATQLSAERYISSITGEFLKEDNSWENNTLSHFSSNVKLPPQIPHLELGNDQELADSVLHLGSSLPRQTKHFLGNLPSSNGNIVLPSEECVTEQSLLPKVGSLASFAEGNADEQSSGLEGACKVNLELLLTNADKGLKAPEQHLKHVAGVLNGESVETSVLNYRELSPHKNRLLSPLRCSAPMSLHNSLVKPERQSKCFEFGKLQPSSSQSLDVQNITDSSFSRTTCFQGVKVDSLGKRSDVISKVEARDITEMTNKASKEPVGCVNNISFLASLAGSTSRNRLQSTRGAGRLQNSGTGLSTNLQHFQEENFRKSSPQLEHTGVFLSTHGVGMNGNNAAAGKSVGECTTHHLPPVKAPLQTKKKTTNHCFLCGKKTGLASSYECRCGNNFCASHRYAETHGCTYDYKSAGRRYLHEANPVVNAPKLPKI.

The region spanning 28–103 (MELFIETLTG…LKLVLAMRGG (76 aa)) is the Ubiquitin-like domain. Disordered regions lie at residues 187 to 217 (HRMS…IIEN) and 238 to 264 (KKPK…TAPS). The segment covering 238-248 (KKPKKAVKIKP) has biased composition (basic residues). Residues 661–708 (KKTTNHCFLCGKKTGLASSYECRCGNNFCASHRYAETHGCTYDYKSAG) form an AN1-type zinc finger. Residues cysteine 667, cysteine 670, cysteine 682, cysteine 684, cysteine 689, histidine 692, histidine 698, and cysteine 700 each contribute to the Zn(2+) site.

This Homo sapiens (Human) protein is AN1-type zinc finger protein 4 (ZFAND4).